We begin with the raw amino-acid sequence, 2327 residues long: Acetyl-CoA carboxylase 2 (2327 aa).

The tract at residues 1 to 62 (MTSTHVATLG…NGGVSDSKKL (62 aa)) is disordered. Positions 134–641 (PIHSVLVANN…HTGWLDTRIA (508 aa)) constitute a Biotin carboxylation domain. Positions 287-481 (ECCLDSIPDE…AAQVAVGMGI (195 aa)) constitute an ATP-grasp domain. Position 313–370 (313–370 (CQVVGYPAMIKASWGGGGKGIRKVHNDDEVRTLFKQVQGEVPGSPIFIMRLAAQSRHL)) interacts with ATP. Residues Glu-436, Glu-450, and Asn-452 each contribute to the Mg(2+) site. Mn(2+)-binding residues include Glu-436, Glu-450, and Asn-452. The active site involves Arg-454. Residues 768–842 (LQNDHDPSKL…QAGDLIARLD (75 aa)) form the Biotinyl-binding domain. Lys-809 bears the N6-biotinyllysine mark. Positions 1568–1909 (PYQPLSVIDL…YIGGPLPVTT (342 aa)) constitute a CoA carboxyltransferase N-terminal domain. Residues 1568 to 2227 (PYQPLSVIDL…EDVLAKEIRA (660 aa)) form a carboxyltransferase region. CoA is bound by residues Arg-1818, Lys-2119, and Arg-2121. In terms of domain architecture, CoA carboxyltransferase C-terminal spans 1913 to 2227 (PPDRPVAYIP…EDVLAKEIRA (315 aa)).

Homodimer. It depends on biotin as a cofactor. The cofactor is Mg(2+). Requires Mn(2+) as cofactor.

Its subcellular location is the cytoplasm. The protein localises to the cytosol. The enzyme catalyses hydrogencarbonate + acetyl-CoA + ATP = malonyl-CoA + ADP + phosphate + H(+). It carries out the reaction N(6)-biotinyl-L-lysyl-[protein] + hydrogencarbonate + ATP = N(6)-carboxybiotinyl-L-lysyl-[protein] + ADP + phosphate + H(+). It functions in the pathway lipid metabolism; malonyl-CoA biosynthesis; malonyl-CoA from acetyl-CoA: step 1/1. Its function is as follows. Multifunctional enzyme that catalyzes the carboxylation of acetyl-CoA, forming malonyl-CoA, which is used in the plastid for fatty acid synthesis and in the cytosol in various biosynthetic pathways including fatty acid elongation. The sequence is that of Acetyl-CoA carboxylase 2 (ACC2) from Oryza sativa subsp. japonica (Rice).